Reading from the N-terminus, the 336-residue chain is Alpha-N-acetylgalactosaminide alpha-2,6-sialyltransferase 5 (336 aa).

Over 1–8 (MKTLMRHG) the chain is Cytoplasmic. Residues 9–29 (LAVCLVLTTMCTSLLLVYSSL) traverse the membrane as a helical; Signal-anchor for type II membrane protein segment. Residues 30–336 (GSQKERPPQQ…VNHAEGKPVF (307 aa)) lie on the Lumenal side of the membrane. Residues 34-76 (ERPPQQQQQQQQQQQQAATATGSTQLVESSPQPRRTAPAGPRQ) form a disordered region. The span at 38 to 49 (QQQQQQQQQQQQ) shows a compositional bias: low complexity. Positions 50-66 (AATATGSTQLVESSPQP) are enriched in polar residues. The cysteines at positions 96 and 245 are disulfide-linked. Residues Asn-137 and Asn-161 are each glycosylated (N-linked (GlcNAc...) asparagine).

It belongs to the glycosyltransferase 29 family. In terms of tissue distribution, high expression in forebrain and to a lesser extent in cerebellum. No expression in salivary gland, intestine, liver, kidney, heart, lung, thymus and spleen.

It is found in the golgi apparatus membrane. The enzyme catalyses a ganglioside GM1b (d18:1(4E)) + CMP-N-acetyl-beta-neuraminate = a ganglioside GD1alpha (d18:1(4E)) + CMP + H(+). It carries out the reaction N-acetyl-alpha-neuraminosyl-(2-&gt;3)-beta-D-galactosyl-(1-&gt;3)-N-acetyl-beta-D-glucosaminyl-(1-&gt;3)-beta-D-galactosyl-(1-&gt;4)-beta-D-glucosyl-(1&lt;-&gt;1')-N-acyl-sphing-4-enine + CMP-N-acetyl-beta-neuraminate = N-acetyl-alpha-neuraminosyl-(2-&gt;3)-beta-D-galactosyl-(1-&gt;3)-[N-acetyl-alpha-neuraminosyl-(2-&gt;6)]-N-acetyl-beta-D-glucosaminyl-(1-&gt;3)-beta-D-galactosyl-(1-&gt;4)-beta-D-glucosyl-(1&lt;-&gt;1')-N-acyl-sphing-4-enine + CMP + H(+). It participates in glycolipid biosynthesis. In terms of biological role, predominantly catalyzes the biosynthesis of ganglioside GD1alpha from GM1b in the brain, by transferring the sialyl group (N-acetyl-alpha-neuraminyl or NeuAc) from CMP-NeuAc to the GalNAc residue on the NeuAc-alpha-2,3-Gal-beta-1,3-GalNAc sequence of GM1b. GD1alpha is a critical molecule in the communication and interaction between neuronal cells and their supportive cells, particularly in brain tissues, and functions as an adhesion molecule in the process of metastasis. Also shows activity towards sialyl Lc4Cer (N-acetyl-alpha-neuraminosyl-(2-&gt;3)-beta-D-galactosyl-(1-&gt;3)-N-acetyl-beta-D-glucosaminyl-(1-&gt;3)-beta-D-galactosyl-(1-&gt;4)-beta-D-glucosyl-(1&lt;-&gt;1')-N-acyl-sphing-4-enine) generating disialyl Lc4Cer, which can lead to the synthesis of disialyl Lewis a (Le(a)), suggested to be a cancer-associated antigen. The protein is Alpha-N-acetylgalactosaminide alpha-2,6-sialyltransferase 5 (St6galnac5) of Mus musculus (Mouse).